The primary structure comprises 591 residues: Aspartate--tRNA(Asp/Asn) ligase (591 aa).

Glu-175 lines the L-aspartate pocket. Residues 199–202 (QQFK) are aspartate. Positions 221 and 453 each coordinate L-aspartate. 221–223 (RDE) contributes to the ATP binding site. Residue Glu-486 coordinates ATP. Arg-493 contacts L-aspartate. 538-541 (GIDR) contacts ATP.

This sequence belongs to the class-II aminoacyl-tRNA synthetase family. Type 1 subfamily. Homodimer.

It localises to the cytoplasm. It catalyses the reaction tRNA(Asx) + L-aspartate + ATP = L-aspartyl-tRNA(Asx) + AMP + diphosphate. In terms of biological role, aspartyl-tRNA synthetase with relaxed tRNA specificity since it is able to aspartylate not only its cognate tRNA(Asp) but also tRNA(Asn). Reaction proceeds in two steps: L-aspartate is first activated by ATP to form Asp-AMP and then transferred to the acceptor end of tRNA(Asp/Asn). This chain is Aspartate--tRNA(Asp/Asn) ligase, found in Jannaschia sp. (strain CCS1).